Here is a 382-residue protein sequence, read N- to C-terminus: Queuine tRNA-ribosyltransferase (382 aa).

Catalysis depends on Asp94, which acts as the Proton acceptor. Residues 94-98 (DSGGF), Asp148, Gln192, and Gly219 each bind substrate. Residues 250-256 (GVGKPED) form an RNA binding region. Catalysis depends on Asp269, which acts as the Nucleophile. The segment at 274–278 (TRNAR) is RNA binding; important for wobble base 34 recognition. Cys307, Cys309, Cys312, and His338 together coordinate Zn(2+).

The protein belongs to the queuine tRNA-ribosyltransferase family. Homodimer. Within each dimer, one monomer is responsible for RNA recognition and catalysis, while the other monomer binds to the replacement base PreQ1. Requires Zn(2+) as cofactor.

It carries out the reaction 7-aminomethyl-7-carbaguanine + guanosine(34) in tRNA = 7-aminomethyl-7-carbaguanosine(34) in tRNA + guanine. It functions in the pathway tRNA modification; tRNA-queuosine biosynthesis. In terms of biological role, catalyzes the base-exchange of a guanine (G) residue with the queuine precursor 7-aminomethyl-7-deazaguanine (PreQ1) at position 34 (anticodon wobble position) in tRNAs with GU(N) anticodons (tRNA-Asp, -Asn, -His and -Tyr). Catalysis occurs through a double-displacement mechanism. The nucleophile active site attacks the C1' of nucleotide 34 to detach the guanine base from the RNA, forming a covalent enzyme-RNA intermediate. The proton acceptor active site deprotonates the incoming PreQ1, allowing a nucleophilic attack on the C1' of the ribose to form the product. After dissociation, two additional enzymatic reactions on the tRNA convert PreQ1 to queuine (Q), resulting in the hypermodified nucleoside queuosine (7-(((4,5-cis-dihydroxy-2-cyclopenten-1-yl)amino)methyl)-7-deazaguanosine). The sequence is that of Queuine tRNA-ribosyltransferase from Haemophilus ducreyi (strain 35000HP / ATCC 700724).